A 128-amino-acid polypeptide reads, in one-letter code: Disintegrin EO4A (128 aa).

Positions 1–20 (MIPVLLVTICLAVFPFQGSS) are cleaved as a signal peptide. Residues 21 to 47 (IILESGNINDYEIVYPKKVNVLPTGAM) constitute a propeptide that is removed on maturation. A Disintegrin domain is found at 26 to 112 (GNINDYEIVY…DCPRNPYKGK (87 aa)). Cystine bridges form between C53–C76, C67–C73, C72–C97, and C85–C104. The Cell attachment site signature appears at 89–91 (RGD). The propeptide occupies 115 to 128 (PMKWPAAAKGSVLM).

The protein belongs to the disintegrin family. Dimeric disintegrin subfamily. In terms of assembly, heterodimer with EO5B; disulfide-linked. As to expression, expressed by the venom gland.

The protein resides in the secreted. Its function is as follows. Poor inhibitor of platelet aggregation. The disintegrin inhibits the adhesion of cells expressing the RGD-dependent integrin alpha-5/beta-1 (ITGA5/ITGB1) to immobilized fibronectin. Inhibition on alpha-2b/beta-3 (ITGA2B/ITGB3) is low. The polypeptide is Disintegrin EO4A (Echis ocellatus (Ocellated saw-scaled viper)).